The sequence spans 291 residues: Ribosomal RNA small subunit methyltransferase A (291 aa).

Positions 37, 39, 64, 85, 110, and 131 each coordinate S-adenosyl-L-methionine.

This sequence belongs to the class I-like SAM-binding methyltransferase superfamily. rRNA adenine N(6)-methyltransferase family. RsmA subfamily.

It is found in the cytoplasm. It catalyses the reaction adenosine(1518)/adenosine(1519) in 16S rRNA + 4 S-adenosyl-L-methionine = N(6)-dimethyladenosine(1518)/N(6)-dimethyladenosine(1519) in 16S rRNA + 4 S-adenosyl-L-homocysteine + 4 H(+). Its function is as follows. Specifically dimethylates two adjacent adenosines (A1518 and A1519) in the loop of a conserved hairpin near the 3'-end of 16S rRNA in the 30S particle. May play a critical role in biogenesis of 30S subunits. This Dehalococcoides mccartyi (strain CBDB1) protein is Ribosomal RNA small subunit methyltransferase A.